The chain runs to 461 residues: Alpha-L-fucosidase (461 aa).

The N-terminal stretch at 1–18 (MKMIIIFFILLILNLIKS) is a signal peptide.

The protein belongs to the glycosyl hydrolase 29 family.

The enzyme catalyses an alpha-L-fucoside + H2O = L-fucose + an alcohol. Alpha-L-fucosidase is responsible for hydrolyzing the alpha-1,6-linked fucose joined to the reducing-end N-acetylglucosamine of the carbohydrate moieties of glycoproteins. The chain is Alpha-L-fucosidase (alfA) from Dictyostelium discoideum (Social amoeba).